The following is a 364-amino-acid chain: MTDVNGAPADVLHTLFHSDQGGHEQVVLCQDRASGLKAVIALHSTALGPALGGTRFYPYASEAEAVADALNLARGMSYKNAMAGLDHGGGKAVIIGDPEQIKSEELLLAYGRFVASLGGRYVTACDVGTYVADMDVVARECRWTTGRSPENGGAGDSSVLTSFGVYQGMRAAAQHLWGDPTLRDRTVGIAGVGKVGHHLVEHLLAEGAHVVVTDVRKDVVRGITERHPSVVAVADTDALIRVENLDIYAPCALGGALNDDTVPVLTAKVVCGAANNQLAHPGVEKDLADRGILYAPDYVVNAGGVIQVADELHGFDFDRCKAKASKIYDTTLAIFARAKEDGIPPAAAADRIAEQRMAEARPRP.

The active site involves K91. NAD(+) is bound at residue 191-197 (GVGKVGH).

The protein belongs to the Glu/Leu/Phe/Val dehydrogenases family. In terms of assembly, homodimer.

It is found in the cytoplasm. The enzyme catalyses L-valine + NAD(+) + H2O = 3-methyl-2-oxobutanoate + NH4(+) + NADH + H(+). It participates in amino-acid degradation; L-valine degradation. Its activity is regulated as follows. Repressed in minimal medium by the presence of glucose and NH4(+), glycerol and NH4(+), or glycerol and asparagine. Functionally, oxidative deamination of branched-chain amino acids. Oxidizes L-valine and L-alpha-aminobutyric acid efficiently, and L-isoleucine and L-leucine less efficiently. Does not act on D-valine. The catabolism of L-valine is the major source of fatty acid precursors for macrolide biosynthesis and a vital source of antibiotic precursors. Uses NAD; no activity was found with NADP. The polypeptide is Valine dehydrogenase (vdh) (Streptomyces coelicolor (strain ATCC BAA-471 / A3(2) / M145)).